The chain runs to 353 residues: Photosystem II D2 protein (353 aa).

Thr2 carries the post-translational modification N-acetylthreonine. The residue at position 2 (Thr2) is a Phosphothreonine. A helical transmembrane segment spans residues Cys41–Thr61. A chlorophyll a-binding site is contributed by His118. Residues Gly125–Pro141 traverse the membrane as a helical segment. Residues Gln130 and Asn143 each coordinate pheophytin a. A helical membrane pass occupies residues Val153–Ser166. His198 is a chlorophyll a binding site. Residues Ala208–Asp228 traverse the membrane as a helical segment. 2 residues coordinate a plastoquinone: His215 and Phe262. His215 lines the Fe cation pocket. A Fe cation-binding site is contributed by His269. A helical transmembrane segment spans residues Gly279–Arg295.

This sequence belongs to the reaction center PufL/M/PsbA/D family. As to quaternary structure, PSII is composed of 1 copy each of membrane proteins PsbA, PsbB, PsbC, PsbD, PsbE, PsbF, PsbH, PsbI, PsbJ, PsbK, PsbL, PsbM, PsbT, PsbX, PsbY, PsbZ, Psb30/Ycf12, at least 3 peripheral proteins of the oxygen-evolving complex and a large number of cofactors. It forms dimeric complexes. The cofactor is The D1/D2 heterodimer binds P680, chlorophylls that are the primary electron donor of PSII, and subsequent electron acceptors. It shares a non-heme iron and each subunit binds pheophytin, quinone, additional chlorophylls, carotenoids and lipids. There is also a Cl(-1) ion associated with D1 and D2, which is required for oxygen evolution. The PSII complex binds additional chlorophylls, carotenoids and specific lipids..

The protein localises to the plastid. Its subcellular location is the chloroplast thylakoid membrane. The catalysed reaction is 2 a plastoquinone + 4 hnu + 2 H2O = 2 a plastoquinol + O2. In terms of biological role, photosystem II (PSII) is a light-driven water:plastoquinone oxidoreductase that uses light energy to abstract electrons from H(2)O, generating O(2) and a proton gradient subsequently used for ATP formation. It consists of a core antenna complex that captures photons, and an electron transfer chain that converts photonic excitation into a charge separation. The D1/D2 (PsbA/PsbD) reaction center heterodimer binds P680, the primary electron donor of PSII as well as several subsequent electron acceptors. D2 is needed for assembly of a stable PSII complex. The sequence is that of Photosystem II D2 protein from Lolium perenne (Perennial ryegrass).